The following is a 307-amino-acid chain: Methionyl-tRNA formyltransferase (307 aa).

A (6S)-5,6,7,8-tetrahydrofolate-binding site is contributed by 108-111; sequence SLLP.

It belongs to the Fmt family.

It catalyses the reaction L-methionyl-tRNA(fMet) + (6R)-10-formyltetrahydrofolate = N-formyl-L-methionyl-tRNA(fMet) + (6S)-5,6,7,8-tetrahydrofolate + H(+). Functionally, attaches a formyl group to the free amino group of methionyl-tRNA(fMet). The formyl group appears to play a dual role in the initiator identity of N-formylmethionyl-tRNA by promoting its recognition by IF2 and preventing the misappropriation of this tRNA by the elongation apparatus. This is Methionyl-tRNA formyltransferase from Xanthomonas euvesicatoria pv. vesicatoria (strain 85-10) (Xanthomonas campestris pv. vesicatoria).